The following is a 547-amino-acid chain: uncharacterized protein (547 aa).

A compositionally biased stretch (basic and acidic residues) spans 38-50; sequence RNLPFHREREKVE. Residues 38-89 form a disordered region; the sequence is RNLPFHREREKVESNPNSSDEEDLTSTNNTRSSDNTTSDTEDDSGEDSYQVE. Positions 62–75 are enriched in low complexity; the sequence is TSTNNTRSSDNTTS. 12 helical membrane-spanning segments follow: residues 108–128, 148–168, 174–194, 197–217, 233–253, 265–285, 346–366, 377–397, 418–438, 445–465, 478–500, and 514–534; these read IYTL…SSIF, LCSA…APLS, LPLY…GGCS, IWSL…PMSA, GALL…PVMG, WDFW…CFTM, MYLV…PLIF, GLAI…TPII, LFPL…LGWT, WAAP…VLAV, AASA…TIVA, and SLLA…FFWG.

It belongs to the major facilitator superfamily. CAR1 family.

It localises to the membrane. This is an uncharacterized protein from Schizosaccharomyces pombe (strain 972 / ATCC 24843) (Fission yeast).